The sequence spans 224 residues: 7-cyano-7-deazaguanine synthase (224 aa).

12-22 contributes to the ATP binding site; that stretch reads LSGGLDSSTVT. Zn(2+) contacts are provided by Cys-193, Cys-201, Cys-204, and Cys-207.

The protein belongs to the QueC family. It depends on Zn(2+) as a cofactor.

It carries out the reaction 7-carboxy-7-deazaguanine + NH4(+) + ATP = 7-cyano-7-deazaguanine + ADP + phosphate + H2O + H(+). It participates in purine metabolism; 7-cyano-7-deazaguanine biosynthesis. In terms of biological role, catalyzes the ATP-dependent conversion of 7-carboxy-7-deazaguanine (CDG) to 7-cyano-7-deazaguanine (preQ(0)). The chain is 7-cyano-7-deazaguanine synthase from Prochlorococcus marinus (strain MIT 9312).